The chain runs to 233 residues: N-(5'-phosphoribosyl)anthranilate isomerase (233 aa).

Belongs to the TrpF family.

The catalysed reaction is N-(5-phospho-beta-D-ribosyl)anthranilate = 1-(2-carboxyphenylamino)-1-deoxy-D-ribulose 5-phosphate. It functions in the pathway amino-acid biosynthesis; L-tryptophan biosynthesis; L-tryptophan from chorismate: step 3/5. In Synechococcus sp. (strain JA-2-3B'a(2-13)) (Cyanobacteria bacterium Yellowstone B-Prime), this protein is N-(5'-phosphoribosyl)anthranilate isomerase.